The primary structure comprises 333 residues: Tetraacyldisaccharide 4'-kinase (333 aa).

57–64 lines the ATP pocket; that stretch reads IVGGAGKT.

It belongs to the LpxK family.

It carries out the reaction a lipid A disaccharide + ATP = a lipid IVA + ADP + H(+). It functions in the pathway glycolipid biosynthesis; lipid IV(A) biosynthesis; lipid IV(A) from (3R)-3-hydroxytetradecanoyl-[acyl-carrier-protein] and UDP-N-acetyl-alpha-D-glucosamine: step 6/6. Its function is as follows. Transfers the gamma-phosphate of ATP to the 4'-position of a tetraacyldisaccharide 1-phosphate intermediate (termed DS-1-P) to form tetraacyldisaccharide 1,4'-bis-phosphate (lipid IVA). This is Tetraacyldisaccharide 4'-kinase from Dechloromonas aromatica (strain RCB).